The following is a 414-amino-acid chain: MAEPLRRRGPRSRGGRASRGARRARAARGRCPRAPRSPTRLIPDTVLVDLVSDSDEEVLEVVADPGEVPVARLPAPAAPEQDSDSDSEGAAEGPAGAPRTLVRRRRRLLDPGEAPVVPVYSGKVQSSLNLIPDNSSLLKLCPSEPEDEADLTDSGSPPSEDALPPGSPWKKKLRKKHEKEEKKMEEFPDQDISPLPQPSSRNKSRKHTEALQKLREVNKRLQDLRSCLSPKQHQSPALQNTDDEVVLVEGSVLPQNPRLFTLKIRCRADLVRLPVKTSEPLQNVVDHMASHLGVSPNRILLLFGETELSPTATPRTLKLGVADIIDCVVLASSSEDTETSQELRLRVQGKEKHQMLEISLSPDSPLKVLMSHYEEAMGLSGHKLSFFFDGTKLSGKELPTDLGLESGDLIEVWG.

Residues 1-42 (MAEPLRRRGPRSRGGRASRGARRARAARGRCPRAPRSPTRLI) form a disordered region. The segment covering 7-33 (RRGPRSRGGRASRGARRARAARGRCPR) has biased composition (basic residues). Phosphoserine occurs at positions 52 and 54. A disordered region spans residues 63 to 118 (ADPGEVPVARLPAPAAPEQDSDSDSEGAAEGPAGAPRTLVRRRRRLLDPGEAPVVP). Residues 68–79 (VPVARLPAPAAP) are compositionally biased toward low complexity. 3 positions are modified to phosphoserine: S83, S85, and S87. Over residues 90 to 100 (AAEGPAGAPRT) the composition is skewed to low complexity. Residue S121 is modified to Phosphoserine. Residue K123 forms a Glycyl lysine isopeptide (Lys-Gly) (interchain with G-Cter in SUMO2) linkage. Positions 139–208 (KLCPSEPEDE…SSRNKSRKHT (70 aa)) are disordered. Positions 170 to 229 (KKKLRKKHEKEEKKMEEFPDQDISPLPQPSSRNKSRKHTEALQKLREVNKRLQDLRSCLS) form a coiled coil. Residues S193, S199, and S309 each carry the phosphoserine modification. T311 and T313 each carry phosphothreonine. The Ubiquitin-like domain occupies 343–414 (LRLRVQGKEK…ESGDLIEVWG (72 aa)). Phosphoserine is present on residues S364 and S385.

In terms of assembly, interacts with NFATC2, TRAF1, TRAF2 and PRMT1. Interacts with UBE2I/UBC9. In terms of processing, methylation at the N-terminus by PRMT1 modulates interaction with the NFAT complex and results in augmented cytokine production.

It is found in the nucleus. It localises to the cytoplasm. Functionally, in T-helper 2 (Th2) cells, regulates the magnitude of NFAT-driven transcription of a specific subset of cytokine genes, including IL3, IL4, IL5 and IL13, but not IL2. Recruits PRMT1 to the IL4 promoter; this leads to enhancement of histone H4 'Arg-3'-methylation and facilitates subsequent histone acetylation at the IL4 locus, thus promotes robust cytokine expression. Down-regulates formation of poly-SUMO chains by UBE2I/UBC9. This chain is NFATC2-interacting protein (Nfatc2ip), found in Rattus norvegicus (Rat).